A 622-amino-acid polypeptide reads, in one-letter code: Type 2 DNA topoisomerase 6 subunit B (622 aa).

ATP-binding positions include Asn48, Asp80, 101–102 (SR), 111–118 (GQQGIGIS), and Lys435.

The protein belongs to the TOP6B family. Homodimer. Heterotetramer of two Top6A and two Top6B chains.

The enzyme catalyses ATP-dependent breakage, passage and rejoining of double-stranded DNA.. Its function is as follows. Relaxes both positive and negative superturns and exhibits a strong decatenase activity. This is Type 2 DNA topoisomerase 6 subunit B from Methanococcoides burtonii (strain DSM 6242 / NBRC 107633 / OCM 468 / ACE-M).